The chain runs to 222 residues: MLKKENIIVLLSGGMDSAVLLWLSKTIFKDVYTISYSYGQKHSIELEYAKELSKIAGVKEHFIVEVPHLKQLKGSALTDENLEIPSENYPDEPPITTVPMRNLIFLSIAASFADVYEIENIGIGIHSLDSPYPDCRAEFASSAEAVINASSVMVAKKKNRIKIFTPFLGMSKTDIAKLGRELGVPFEKTYSCYKGTVPPCGECATCRQREEALRETFSDTTT.

11 to 21 contacts ATP; that stretch reads LSGGMDSAVLL. Residues Cys-192, Cys-200, Cys-203, and Cys-206 each contribute to the Zn(2+) site.

Belongs to the QueC family. It depends on Zn(2+) as a cofactor.

It catalyses the reaction 7-carboxy-7-deazaguanine + NH4(+) + ATP = 7-cyano-7-deazaguanine + ADP + phosphate + H2O + H(+). The protein operates within purine metabolism; 7-cyano-7-deazaguanine biosynthesis. In terms of biological role, catalyzes the ATP-dependent conversion of 7-carboxy-7-deazaguanine (CDG) to 7-cyano-7-deazaguanine (preQ(0)). The sequence is that of 7-cyano-7-deazaguanine synthase from Sulfurihydrogenibium sp. (strain YO3AOP1).